Here is a 119-residue protein sequence, read N- to C-terminus: Large ribosomal subunit protein bL19 (119 aa).

It belongs to the bacterial ribosomal protein bL19 family.

This protein is located at the 30S-50S ribosomal subunit interface and may play a role in the structure and function of the aminoacyl-tRNA binding site. This Leuconostoc citreum (strain KM20) protein is Large ribosomal subunit protein bL19.